The chain runs to 143 residues: FAM161 homolog famh-136 (143 aa).

It belongs to the FAM136 family.

It localises to the cytoplasm. Functionally, may play a role in locomotion and behavior. The protein is FAM161 homolog famh-136 of Caenorhabditis elegans.